The primary structure comprises 107 residues: Virulence factor PGA16 (107 aa).

An N-terminal signal peptide occupies residues 1–18 (MRVFQIVYILIISNLIYA). The disordered stretch occupies residues 26 to 56 (SHHHKNDNNIADNTNNNNNNNNNNNNNNITN). Over residues 33–56 (NNIADNTNNNNNNNNNNNNNNITN) the composition is skewed to low complexity. Asn-53 and Asn-56 each carry an N-linked (GlcNAc...) asparagine glycan. Gly-76 carries GPI-anchor amidated glycine lipidation. Positions 77–107 (VAAMGGILGQNGWFYGDAGLMAAIFGAMLLL) are cleaved as a propeptide — removed in mature form.

The protein localises to the cell membrane. Functionally, cell surface GPI-anchored protein required for virulence. Mediates hyphal ramification which is important for the interaction with host cells. This is Virulence factor PGA16 (PGA16) from Candida albicans (strain SC5314 / ATCC MYA-2876) (Yeast).